A 38-amino-acid polypeptide reads, in one-letter code: Photosystem II reaction center protein L (38 aa).

Residues 17 to 37 (SLFWGLLLIFVLAVLFSSYFF) form a helical membrane-spanning segment.

Belongs to the PsbL family. PSII is composed of 1 copy each of membrane proteins PsbA, PsbB, PsbC, PsbD, PsbE, PsbF, PsbH, PsbI, PsbJ, PsbK, PsbL, PsbM, PsbT, PsbY, PsbZ, Psb30/Ycf12, at least 3 peripheral proteins of the oxygen-evolving complex and a large number of cofactors. It forms dimeric complexes.

The protein localises to the plastid. It is found in the chloroplast thylakoid membrane. Functionally, one of the components of the core complex of photosystem II (PSII). PSII is a light-driven water:plastoquinone oxidoreductase that uses light energy to abstract electrons from H(2)O, generating O(2) and a proton gradient subsequently used for ATP formation. It consists of a core antenna complex that captures photons, and an electron transfer chain that converts photonic excitation into a charge separation. This subunit is found at the monomer-monomer interface and is required for correct PSII assembly and/or dimerization. This is Photosystem II reaction center protein L from Cyanidium caldarium (Red alga).